Reading from the N-terminus, the 293-residue chain is Protease HtpX homolog (293 aa).

The next 2 helical transmembrane spans lie at 6-26 (VAVM…LIGG) and 28-48 (SGMV…YWNS). His130 contributes to the Zn(2+) binding site. The active site involves Glu131. His134 contacts Zn(2+). A run of 2 helical transmembrane segments spans residues 145 to 165 (LTAT…FFGG) and 172 to 192 (PLGA…AMMV). Residue Glu201 participates in Zn(2+) binding.

This sequence belongs to the peptidase M48B family. The cofactor is Zn(2+).

The protein localises to the cell inner membrane. The polypeptide is Protease HtpX homolog (Rhodospirillum rubrum (strain ATCC 11170 / ATH 1.1.1 / DSM 467 / LMG 4362 / NCIMB 8255 / S1)).